The chain runs to 298 residues: Calcium-binding protein 1 (298 aa).

Over residues 1 to 10 the composition is skewed to basic and acidic residues; the sequence is MSSHIAKSES. Positions 1–131 are disordered; it reads MSSHIAKSES…APAGTPEADP (131 aa). S2 carries the N-myristoyl glycine lipid modification. A lipid anchor (S-palmitoyl cysteine) is attached at H4. Residues 11 to 25 show a composition bias toward low complexity; the sequence is KTSLLKAAAASGGSR. 4 EF-hand domains span residues 153-188, 207-224, 230-265, and 267-298; these read EEIEELREAFREFDKDKDGYINCRDLGNCMRTMGYM, GHVDFDDFVELMGPKLLA, IGVKELRDAFREFDTNGDGEISTSELREAMRKLLGH, and VGHRDIEEIIRDVDLNGDGRVDFEEFVRMMSR. Positions 166, 168, 170, 172, and 177 each coordinate Ca(2+). Ca(2+) contacts are provided by D243, N245, D247, and E249. S251 carries the phosphoserine modification. Residues E254, D280, N282, D284, R286, and E291 each contribute to the Ca(2+) site.

In terms of assembly, interacts with ITPR1, ITPR2 and ITPR3. The strength of this interaction inversely correlates with calcium concentration. Interacts with CACNA1A (via C-terminal CDB motif) in the pre- and postsynaptic membranes. Interacts with CACNA1C. Interacts with CACNA1D. Interacts (via EF-hands 1 and 2) at microtubules with MAP1LC3B. Interacts (via EF-hands 1 and 2) with NSMF (via the central NLS-containing motif region), the interaction occurs in a calcium dependent manner after synaptic NMDA receptor stimulation and prevents nuclear import of NSMF. Interacts with MYO1C and TRPC5. Interacts with SPACA9. Post-translationally, phosphorylated. The phosphorylation regulates the activity. As to expression, somatodendritic compartment of neurons. Restricted expression in retina to a subpopulation of amacrine, bipolar, and ganglion cells. According to PubMed:11906216, expression is heterogeneous within brain regions and their major cell types and does not match with those of marker proteins for characterized neuronal subpopulations. Isoform 2: Minor isoform expressed in the brain, in the granule cell layer of the cerebellum, at low level. Not developmentally regulated. Isoform 3: Minor isoform expressed in the brain, in the granule cell layer. of the cerebellum, at low level. Not developmentally regulated.

The protein resides in the cytoplasm. The protein localises to the cytoskeleton. Modulates calcium-dependent activity of inositol 1,4,5-triphosphate receptors (ITPRs). Inhibits agonist-induced intracellular calcium signaling. Enhances inactivation and does not support calcium-dependent facilitation of voltage-dependent P/Q-type calcium channels. Causes calcium-dependent facilitation and inhibits inactivation of L-type calcium channels by binding to the same sites as calmodulin in the C-terminal domain of CACNA1C, but has an opposite effect on channel function. Suppresses the calcium-dependent inactivation of CACNA1D. Inhibits TRPC5 channels. Prevents NMDA receptor-induced cellular degeneration. Required for the normal transfer of light signals through the retina. The polypeptide is Calcium-binding protein 1 (Cabp1) (Rattus norvegicus (Rat)).